The sequence spans 307 residues: MTDVLPVVAVTYSPGPHLERFLASLSLATERPVSVLLADNGSTDGTPQAAVQRYPNVRLLPTGANLGYGTAVNRTIAQLGEMAGDAGEPWVDDWVIVANPDVQWGPGSIDALLDAASRWPRAGALGPLIRDPDGSVYPSARQMPSLIRGGMHAVLGPFWPRNPWTTAYRQERLEPSERPVGWLSGSCLLVRRSAFGQVGGFDERYFMYMEDVDLGDRLGKAGWLSVYVPSAEVLHHKAHSTGRDPASHLAAHHKSTYIFLADRHSGWWRAPLRWTLRGSLALRSHLMVRSSLRRSRRRKLKLVEGRH.

The protein belongs to the glycosyltransferase 2 family. Mn(2+) is required as a cofactor. The cofactor is Mg(2+).

It catalyses the reaction N-acetyl-alpha-D-glucosaminyl-1-diphospho-trans,octa-cis-decaprenol + dTDP-beta-L-rhamnose = alpha-L-rhamnosyl-(1-&gt;3)-N-acetyl-alpha-D-glucosaminyl-diphospho-trans,octa-cis-decaprenol + dTDP + H(+). In terms of biological role, involved in the biosynthesis of the mycolylarabinogalactan-peptidoglycan (mAGP) complex, an essential component of the mycobacterial cell wall. Catalyzes the transfer of the rhamnosyl moiety from dTDP-rhamnosyl (dTDP-Rha) onto the decaprenyl-pyrophosphoryl-GlcNAc (C50-PP-GlcNAc), yielding rhamnosyl-decaprenyl-pyrophosphoryl-GlcNAc (Rha-C50-PP-GlcNAc). The chain is N-acetylglucosaminyl-diphospho-decaprenol L-rhamnosyltransferase (wbbL) from Mycobacterium tuberculosis (strain CDC 1551 / Oshkosh).